The following is a 697-amino-acid chain: Disintegrin and metalloproteinase domain-containing protein 26A (697 aa).

An N-terminal signal peptide occupies residues 1–22; sequence MFLKFCLWTMFFFSAWSPIGHA. A propeptide spanning residues 23 to 187 is cleaved from the precursor; the sequence is KYSSLLEVVT…NAPTLLQIPY (165 aa). The N-linked (GlcNAc...) asparagine glycan is linked to N127. The Cysteine switch motif lies at 159 to 166; that stretch reads MRCGLSEE. Residue C161 participates in Zn(2+) binding. Residues 188–671 are Extracellular-facing; it reads ENWWTHHRFI…PPLPLSHSKW (484 aa). In terms of domain architecture, Peptidase M12B spans 195–385; it reads RFIEYFVVLD…TKRSCLYDIP (191 aa). A glycan (N-linked (GlcNAc...) asparagine) is linked at N214. 3 disulfide bridges follow: C305/C380, C344/C366, and C346/C351. H329 is a Zn(2+) binding site. Residue E330 is part of the active site. H333 and H339 together coordinate Zn(2+). 6 N-linked (GlcNAc...) asparagine glycosylation sites follow: N365, N391, N464, N506, N531, and N573. Positions 392–478 constitute a Disintegrin domain; sequence LTVCGNKVVE…ECPGDVYKAD (87 aa). C450 and C470 are disulfide-bonded. One can recognise an EGF-like domain in the interval 616-649; sequence LVSNCSPQLYHMQGICNNKQHCHCGVTWKPPDCQ. 2 disulfide bridges follow: C620-C631 and C639-C648. The helical transmembrane segment at 672–692 threads the bilayer; it reads IVYILIVLDVCIVIIIYLFSF. Over 693-697 the chain is Cytoplasmic; the sequence is YKLSK.

Zn(2+) serves as cofactor. As to expression, expressed in sperm (at protein level). Expressed specifically in testis.

The protein localises to the membrane. Its function is as follows. Sperm surface membrane protein that may be involved in spermatogenesis and fertilization. The protein is Disintegrin and metalloproteinase domain-containing protein 26A of Mus musculus (Mouse).